The primary structure comprises 356 residues: DNA polymerase IV (356 aa).

In terms of domain architecture, UmuC spans 7–188 (IIHIDMDCFY…LPLKKISGVG (182 aa)). 2 residues coordinate Mg(2+): D11 and D106. E107 is an active-site residue.

This sequence belongs to the DNA polymerase type-Y family. As to quaternary structure, monomer. Requires Mg(2+) as cofactor.

The protein resides in the cytoplasm. It catalyses the reaction DNA(n) + a 2'-deoxyribonucleoside 5'-triphosphate = DNA(n+1) + diphosphate. In terms of biological role, poorly processive, error-prone DNA polymerase involved in untargeted mutagenesis. Copies undamaged DNA at stalled replication forks, which arise in vivo from mismatched or misaligned primer ends. These misaligned primers can be extended by PolIV. Exhibits no 3'-5' exonuclease (proofreading) activity. May be involved in translesional synthesis, in conjunction with the beta clamp from PolIII. This chain is DNA polymerase IV, found in Glaesserella parasuis serovar 5 (strain SH0165) (Haemophilus parasuis).